Here is a 133-residue protein sequence, read N- to C-terminus: Phosphoribosyl-AMP cyclohydrolase (133 aa).

Aspartate 82 provides a ligand contact to Mg(2+). Cysteine 83 provides a ligand contact to Zn(2+). Residues aspartate 84 and aspartate 86 each coordinate Mg(2+). Residues cysteine 100 and cysteine 107 each coordinate Zn(2+).

It belongs to the PRA-CH family. As to quaternary structure, homodimer. Requires Mg(2+) as cofactor. The cofactor is Zn(2+).

Its subcellular location is the cytoplasm. It catalyses the reaction 1-(5-phospho-beta-D-ribosyl)-5'-AMP + H2O = 1-(5-phospho-beta-D-ribosyl)-5-[(5-phospho-beta-D-ribosylamino)methylideneamino]imidazole-4-carboxamide. The protein operates within amino-acid biosynthesis; L-histidine biosynthesis; L-histidine from 5-phospho-alpha-D-ribose 1-diphosphate: step 3/9. Functionally, catalyzes the hydrolysis of the adenine ring of phosphoribosyl-AMP. This is Phosphoribosyl-AMP cyclohydrolase from Aromatoleum aromaticum (strain DSM 19018 / LMG 30748 / EbN1) (Azoarcus sp. (strain EbN1)).